Reading from the N-terminus, the 216-residue chain is Ras-related protein Rab-11A (216 aa).

Gly-2 is modified (N-acetylglycine). 12 residues coordinate GTP: Ser-20, Gly-21, Val-22, Gly-23, Lys-24, Ser-25, Asn-26, Asn-37, Leu-38, Ser-40, Ser-42, and Thr-43. Ser-25 is a binding site for Mg(2+). Residues 36 to 47 carry the Switch 1 motif; it reads FNLESKSTIGVE. Residues Thr-43 and Asp-66 each coordinate Mg(2+). The Switch 2 signature appears at 67–86; the sequence is TAGQERYRAITSAYYRGAVG. GTP contacts are provided by Gly-69, Asn-124, Lys-125, Asp-127, Ala-155, and Leu-156. Residues 183–207 are disordered; it reads DRRENDMSPSNNVVPIHVPPTTENK. Residues Cys-212 and Cys-213 are each lipidated (S-geranylgeranyl cysteine). A Cysteine methyl ester modification is found at Cys-213. Residues 214 to 216 constitute a propeptide, removed in mature form; that stretch reads QNI.

It belongs to the small GTPase superfamily. Rab family. Interacts (GTP-bound form) with RAB11FIPs (via their C-termini) including RAB11FIP1, RAB11FIP2, RAB11FIP3, RAB11FIP4 and RAB11FIP5 effectors. Forms a complex with RAB11FIP3 and dynein intermediate chain DYNC1LI1; the interaction between RAB11A1 and RAB11FIP3 is direct; the complex regulates endocytic trafficking. Interacts with EVI5; EVI5 and RAB11FIP3 may be mutually exclusive and compete for binding RAB11A. Interacts with SGSM1, SGSM2, SGSM3 and VIPAS39. Interacts with EXOC6 in a GTP-dependent manner. Interacts with RAB11FIP5. Interacts with STXBP6. Interacts (GDP-bound form) with ZFYVE27. Interacts with BIRC6/bruce. May interact with TBC1D14. Interacts with UNC119; in a cell cycle-dependent manner. GDP-bound and nucleotide-free forms interact with SH3BP5. Interacts (GDP-bound form) with KIF5A in a ZFYVE27-dependent manner. Interacts (GDP-bound form) with RELCH. Found in a complex composed of RELCH, OSBP1 and RAB11A. Interacts with TBC1D12. Interacts with DEF6. Interacts with ATP9A. Forms a heterotetramer with RAB11FIP3; the GTP-bound form is preferred for binding. Forms a complex with Rabin8/RAB3IP and RAB11FIP3, probably a heterohexamer with two of each protein subunit, where Rabin8/RAB3IP and RAB11FIP3 simultaneously bind to RAB11A; the complex promotes preciliary trafficking and cilia growth. Forms a complex containing RAB11A, ASAP1, Rabin8/RAB3IP, RAP11FIP3 and ARF4; the complex promotes preciliary trafficking; the complex binds to RHO in photoreceptor cells and promotes RHO ciliary transport. Interacts (GTP-bound form) with WDR44; the interaction prevents RAB11A-RAB3IP-RAB11FIP3 complex formation. It depends on Mg(2+) as a cofactor.

Its subcellular location is the cell membrane. It is found in the endosome membrane. It localises to the recycling endosome membrane. The protein resides in the cleavage furrow. The protein localises to the cytoplasmic vesicle. Its subcellular location is the phagosome. It is found in the cytoplasmic vesicle membrane. It localises to the golgi apparatus. The protein resides in the trans-Golgi network. It catalyses the reaction GTP + H2O = GDP + phosphate + H(+). Its activity is regulated as follows. Regulated by guanine nucleotide exchange factors (GEFs) which promote the exchange of bound GDP for free GTP. Regulated by GTPase activating proteins (GAPs) which increase the GTP hydrolysis activity. Inhibited by GDP dissociation inhibitors (GDIs) which prevent Rab-GDP dissociation. Functionally, the small GTPases Rab are key regulators of intracellular membrane trafficking, from the formation of transport vesicles to their fusion with membranes. Rabs cycle between an inactive GDP-bound form and an active GTP-bound form that is able to recruit to membranes different set of downstream effectors directly responsible for vesicle formation, movement, tethering and fusion. The small Rab GTPase RAB11A regulates endocytic recycling. Forms a functional Rab11/RAB11FIP3/dynein complex that regulates the movement of peripheral sorting endosomes (SE) along microtubule tracks toward the microtubule organizing center/centrosome, generating the endosomal recycling compartment (ERC). Acts as a major regulator of membrane delivery during cytokinesis. Together with MYO5B and RAB8A participates in epithelial cell polarization. Together with Rabin8/RAB3IP, RAB8A, the exocyst complex, PARD3, PRKCI, ANXA2, CDC42 and DNMBP promotes transcytosis of PODXL to the apical membrane initiation sites (AMIS), apical surface formation and lumenogenesis. Together with MYO5B participates in CFTR trafficking to the plasma membrane and TF (Transferrin) recycling in nonpolarized cells. Required in a complex with MYO5B and RAB11FIP2 for the transport of NPC1L1 to the plasma membrane. Participates in the sorting and basolateral transport of CDH1 from the Golgi apparatus to the plasma membrane. Regulates the recycling of FCGRT (receptor of Fc region of monomeric IgG) to basolateral membranes. May also play a role in melanosome transport and release from melanocytes. Promotes Rabin8/RAB3IP preciliary vesicular trafficking to mother centriole by forming a ciliary targeting complex containing Rab11, ASAP1, Rabin8/RAB3IP, RAB11FIP3 and ARF4, thereby regulating ciliogenesis initiation. On the contrary, upon LPAR1 receptor signaling pathway activation, interaction with phosphorylated WDR44 prevents Rab11-RAB3IP-RAB11FIP3 complex formation and cilia growth. Participates in the export of a subset of neosynthesized proteins through a Rab8-Rab10-Rab11-endososomal dependent export route via interaction with WDR44. This chain is Ras-related protein Rab-11A, found in Bos taurus (Bovine).